The primary structure comprises 466 residues: Uridine kinase-like protein 3 (466 aa).

The segment at His41–Gly246 is uridine kinase. A uracil phosphoribosyltransferase region spans residues Asn256–Glu466. GTP-binding positions include Lys280, Arg289, and Cys323 to Leu326. Residues Arg333 and Arg358 each contribute to the 5-phospho-alpha-D-ribose 1-diphosphate site. Position 378 (Arg378) interacts with GTP. Residues Asp384, Thr389–Ser392, and Glu455 each bind 5-phospho-alpha-D-ribose 1-diphosphate. Gly454–Phe456 is a uracil binding site.

The protein in the N-terminal section; belongs to the uridine kinase family. In the C-terminal section; belongs to the UPRTase family. Mg(2+) is required as a cofactor.

The catalysed reaction is UMP + diphosphate = 5-phospho-alpha-D-ribose 1-diphosphate + uracil. It catalyses the reaction cytidine + ATP = CMP + ADP + H(+). The enzyme catalyses uridine + ATP = UMP + ADP + H(+). It functions in the pathway pyrimidine metabolism; UMP biosynthesis via salvage pathway; UMP from uracil: step 1/1. The protein operates within pyrimidine metabolism; CTP biosynthesis via salvage pathway; CTP from cytidine: step 1/3. Its pathway is pyrimidine metabolism; UMP biosynthesis via salvage pathway; UMP from uridine: step 1/1. Its activity is regulated as follows. Allosterically activated by GTP. Involved in the pyrimidine salvage pathway. The uracil phosphoribosyltransferase (UPRT) activity, that catalyzes the conversion of uracil and 5-phospho-alpha-D-ribose 1-diphosphate (PRPP) to UMP and diphosphate, is unsure. This Arabidopsis thaliana (Mouse-ear cress) protein is Uridine kinase-like protein 3 (UKL3).